Reading from the N-terminus, the 486-residue chain is UDP-N-acetylmuramate--L-alanine ligase (486 aa).

123–129 is a binding site for ATP; that stretch reads GTHGKTT.

The protein belongs to the MurCDEF family.

It localises to the cytoplasm. The enzyme catalyses UDP-N-acetyl-alpha-D-muramate + L-alanine + ATP = UDP-N-acetyl-alpha-D-muramoyl-L-alanine + ADP + phosphate + H(+). Its pathway is cell wall biogenesis; peptidoglycan biosynthesis. In terms of biological role, cell wall formation. This is UDP-N-acetylmuramate--L-alanine ligase from Pseudomonas fluorescens (strain Pf0-1).